Consider the following 205-residue polypeptide: Cytochrome c biogenesis ATP-binding export protein CcmA 1 (205 aa).

Residues 2–205 (LEARDLYCER…LALTGGGAGL (204 aa)) enclose the ABC transporter domain. An ATP-binding site is contributed by 34-41 (GGNGAGKT).

Belongs to the ABC transporter superfamily. CcmA exporter (TC 3.A.1.107) family. The complex is composed of two ATP-binding proteins (CcmA) and two transmembrane proteins (CcmB).

It localises to the cell inner membrane. The enzyme catalyses heme b(in) + ATP + H2O = heme b(out) + ADP + phosphate + H(+). In terms of biological role, part of the ABC transporter complex CcmAB involved in the biogenesis of c-type cytochromes; once thought to export heme, this seems not to be the case, but its exact role is uncertain. Responsible for energy coupling to the transport system. This chain is Cytochrome c biogenesis ATP-binding export protein CcmA 1, found in Salmonella typhimurium (strain LT2 / SGSC1412 / ATCC 700720).